Consider the following 339-residue polypeptide: Ribosomal RNA small subunit methyltransferase H (339 aa).

S-adenosyl-L-methionine-binding positions include 40-42 (GGY), Asp58, Phe85, Asp106, and Gln113.

Belongs to the methyltransferase superfamily. RsmH family.

The protein localises to the cytoplasm. It carries out the reaction cytidine(1402) in 16S rRNA + S-adenosyl-L-methionine = N(4)-methylcytidine(1402) in 16S rRNA + S-adenosyl-L-homocysteine + H(+). Specifically methylates the N4 position of cytidine in position 1402 (C1402) of 16S rRNA. In Parvibaculum lavamentivorans (strain DS-1 / DSM 13023 / NCIMB 13966), this protein is Ribosomal RNA small subunit methyltransferase H.